Here is a 676-residue protein sequence, read N- to C-terminus: Pescadillo homolog (676 aa).

Residues 298–327 (IAAMADDEDEQEVEMAEADAEDDDEEENTE) are a coiled coil. 4 disordered regions span residues 298–338 (IAAM…TAPD), 413–439 (PLANGASAAGAEDAATPQVQWPHSTKP), 478–502 (VKPKKGEYDPNLPLAAQQPDGEAEA), and 515–676 (EVDD…AERA). Positions 302–327 (ADDEDEQEVEMAEADAEDDDEEENTE) are enriched in acidic residues. In terms of domain architecture, BRCT spans 351 to 466 (EIASLFAPFT…KLLRPDLYAP (116 aa)). A compositionally biased stretch (low complexity) spans 415 to 427 (ANGASAAGAEDAA). Acidic residues-rich tracts occupy residues 515–524 (EVDDDEDMDA), 539–557 (DVADSDDDDEDDSESDAEG), and 565–577 (FDDESEAESDISE). Residues 568–676 (ESEAESDISE…EKAKAAAERA (109 aa)) are a coiled coil. 4 stretches are compositionally biased toward basic and acidic residues: residues 579-608 (EAARLQHQRELEAEATGKKLDVKAPTKKEQ), 620-631 (KRAEEEERDRQK), 643-659 (KRIEYGENKRDTESENL), and 666-676 (LEKAKAAAERA).

Belongs to the pescadillo family. Component of the NOP7 complex, composed of ERB1, NOP7 and YTM1. The complex is held together by ERB1, which interacts with NOP7 via its N-terminal domain and with YTM1 via a high-affinity interaction between the seven-bladed beta-propeller domains of the 2 proteins. The NOP7 complex associates with the 66S pre-ribosome.

It is found in the nucleus. The protein localises to the nucleolus. It localises to the nucleoplasm. Functionally, component of the NOP7 complex, which is required for maturation of the 25S and 5.8S ribosomal RNAs and formation of the 60S ribosome. The polypeptide is Pescadillo homolog (Phaeosphaeria nodorum (strain SN15 / ATCC MYA-4574 / FGSC 10173) (Glume blotch fungus)).